A 627-amino-acid polypeptide reads, in one-letter code: MSVISIVPLASKPCLYKSFISSTHEPKALRRPISTVGLCRRAKSVTASMSMSSSTALSDDGVQRRIGNHHSNLWDDNFIQSLSSPYGASSYAERAERLIGEVKEIFNRISMANGELVSHVDDLLQHLSMVDNVERLGIDRHFQTEIKVSLDYVYSYWSEKGIGPGRDIVCADLNTTALGFRLLRLHGYTMFPDVFEQFKDQMGRIACSTNQTERQISSILNLFRASLIAFPWEKVMEEAEIFSTAYLKEALQTIPVSSLSREIQYVLDYRWHSDLPRLETRTYIDILRENATNETLDMKTEKLLELAKVEFNIFNSLQQNELKCVSRWWKESGSPDLTFIRHRQVEFYTLVSGIDMEPKRSTFRINFVKICHFVTILDDMYDTFGTIDELRLFTAAVKRWDKSATECLPEYMKGVYIDLYETVNELAREAYKSQGRDTLNYARQALEDYLGSYLKEAEWISTGYIPTFEEYLVNGKVSSAHRIATLQPILMLDVPFPPHVLQEIDFPSKFNDLAGSILRLRGDTRCYQNDRARGEEASCISCYMKDNPGSTEEDALNHINGMIEKQIKELNWELLKPDKNVPISSKKHAFNISRGLHHFYKYRDGYTVANSETRNLVIKTVLEPVPM.

The N-terminal 36 residues, methionine 1–valine 36, are a transit peptide targeting the chloroplast. Mg(2+) is bound by residues aspartate 378, aspartate 382, and aspartate 530. The DDXXD motif signature appears at aspartate 378–aspartate 382.

The protein belongs to the terpene synthase family. Tpsd subfamily. Mg(2+) is required as a cofactor. Mn(2+) serves as cofactor.

The protein localises to the plastid. Its subcellular location is the chloroplast. The catalysed reaction is (2E)-geranyl diphosphate = (+)-car-3-ene + diphosphate. It functions in the pathway terpene metabolism; oleoresin biosynthesis. Functionally, terpene synthase (TPS) involved in the biosynthesis of monoterpene natural products included in conifer oleoresin secretions and volatile emissions; these compounds contribute to biotic and abiotic stress defense against herbivores (e.g. insect attack by white pine weevil P.strobi) and pathogens. Catalyzes the conversion of (2E)-geranyl diphosphate (GPP) to (+)-car-3-ene. In Picea sitchensis (Sitka spruce), this protein is (+)-3-carene synthase 1, chloroplastic.